The sequence spans 211 residues: Porin MspA (211 aa).

The first 27 residues, 1-27, serve as a signal peptide directing secretion; the sequence is MKAISRVLIAMVAAIAALFTSTGTSHA.

This sequence belongs to the mycobacterial porin (TC 1.B.24) family. Forms very stable octamers. Isolated as a 100 kDa complex that can be reduced to monomers upon boiling in 80% dimethyl sulfoxide for 15 minutes. Structures show a goblet with the wide end on the exterior of the outer membrane and a central channel. It is not known if mixed oligomers of MspA with other Msp subunits form in vivo.

The protein localises to the cell outer membrane. The protein resides in the secreted. It localises to the cell wall. The major porin in this organism, forms a water-filled channel which favors the permeation of cations, amino acids, iron Fe(3+) and less efficiently phosphate. Does not transport Fe-ExoMS, the predominant siderophore. Plays a role in transport of beta-lactamase and hydrophilic fluoroquinolone antibiotics such as norfloxacin as well as chloramphenicol. There are about 2400 porins in wild-type, 800 in an mspA deletion and 150 in a double mspA-mspC deletion. Different conductance values with maxima at 2.3 and 4.6 nanosiemens might be caused by a simultaneous reconstitution of MspA channels into the membrane or by the existence of different MspA conformations. The protein is Porin MspA (mspA) of Mycolicibacterium smegmatis (strain ATCC 700084 / mc(2)155) (Mycobacterium smegmatis).